The primary structure comprises 329 residues: Chlorophyllase-1, chloroplastic (329 aa).

The transit peptide at 1–21 (MAAMVDAKPAASVQGTPLLAT) directs the protein to the chloroplast. A GXSXG motif is present at residues 145–149 (GHSRG). Ser-147 serves as the catalytic Nucleophile. Active-site charge relay system residues include Asp-169 and His-242.

It belongs to the AB hydrolase superfamily. Lipase family.

The protein localises to the plastid. It localises to the chloroplast. It catalyses the reaction a chlorophyll + H2O = a chlorophyllide + phytol + H(+). It participates in porphyrin-containing compound metabolism; chlorophyll degradation. Its function is as follows. Catalyzes the hydrolysis of ester bond in chlorophyll to yield chlorophyllide and phytol. This Citrus sinensis (Sweet orange) protein is Chlorophyllase-1, chloroplastic (CHLASE1).